Consider the following 140-residue polypeptide: Ergosterol biosynthetic protein 28 homolog (140 aa).

4 consecutive transmembrane segments (helical) span residues 4-24, 52-72, 79-99, and 105-125; these read FLNV…GNTL, TFGI…IDIH, ITLW…FVYG, and IGVL…LVGL.

This sequence belongs to the ERG28 family. In terms of tissue distribution, ubiquitous; strongly expressed in testis and some cancer cell lines.

It localises to the endoplasmic reticulum membrane. This is Ergosterol biosynthetic protein 28 homolog from Homo sapiens (Human).